The primary structure comprises 103 residues: Large ribosomal subunit protein bL21 (103 aa).

Belongs to the bacterial ribosomal protein bL21 family. In terms of assembly, part of the 50S ribosomal subunit. Contacts protein L20.

Its function is as follows. This protein binds to 23S rRNA in the presence of protein L20. The protein is Large ribosomal subunit protein bL21 of Shewanella denitrificans (strain OS217 / ATCC BAA-1090 / DSM 15013).